Here is a 675-residue protein sequence, read N- to C-terminus: Zeaxanthin epoxidase, chloroplastic (675 aa).

The N-terminal 25 residues, 1 to 25 (MASTVLYNSLTTSTTVFLRSHLPIS), are a transit peptide targeting the chloroplast. Residues 92 to 120 (RILV…KVFE) and 370 to 383 (KLTW…LLGD) each bind FAD. One can recognise an FHA domain in the interval 558–622 (ICLSRKEDEP…HGTWITDNEG (65 aa)).

Requires FAD as cofactor.

Its subcellular location is the plastid. It is found in the chloroplast thylakoid membrane. It carries out the reaction all-trans-zeaxanthin + 4 reduced [2Fe-2S]-[ferredoxin] + 2 O2 + 4 H(+) = all-trans-violaxanthin + 4 oxidized [2Fe-2S]-[ferredoxin] + 2 H2O. Its pathway is plant hormone biosynthesis; abscisate biosynthesis. Inhibited by diphenyleneiodonium (DPI). Converts zeaxanthin into antheraxanthin and subsequently violaxanthin. Involved in the epoxidation of zeaxanthin. This chain is Zeaxanthin epoxidase, chloroplastic, found in Spinacia oleracea (Spinach).